We begin with the raw amino-acid sequence, 237 residues long: BTB/POZ domain-containing protein KCTD6 (237 aa).

The BTB domain occupies 12–81 (HPVTLNVGGH…LRTSELTLPV (70 aa)).

In terms of assembly, homopentamer. May be part of a cullin-containing E3 ubiquitin-protein ligase complex.

It functions in the pathway protein modification; protein ubiquitination. Its function is as follows. Probable substrate-specific adapter of a cullin-containing E3 ubiquitin-protein ligase complex mediating the ubiquitination and subsequent proteasomal degradation of target proteins. In Danio rerio (Zebrafish), this protein is BTB/POZ domain-containing protein KCTD6 (kctd6).